Consider the following 189-residue polypeptide: GTPase NRas (189 aa).

Residues 10–18 and 29–30 each bind GTP; these read GAGGVGKSA and VD. The short motif at 32–40 is the Effector region element; that stretch reads YDPTIEDSY. 57 to 61 lines the GTP pocket; the sequence is DTAGQ. Phosphoserine is present on S89. 116–119 serves as a coordination point for GTP; it reads NKCD. A hypervariable region region spans residues 166 to 185; it reads YRMKKLNSSDDGTQGCMGLP. K170 is covalently cross-linked (Glycyl lysine isopeptide (Lys-Gly) (interchain with G-Cter in ubiquitin)). C181 carries the S-palmitoyl cysteine lipid modification. Residue C186 is the site of S-farnesyl cysteine attachment. The propeptide at 187-189 is removed in mature form; sequence VVM.

Belongs to the small GTPase superfamily. Ras family. In terms of assembly, interacts (active GTP-bound form preferentially) with RGS14. Interacts (active GTP-bound form) with RASSF7. Interacts (active GTP-bound form) with both SHOC2 and PP1c (all isoforms) to form a tertiary complex; SHOC2 and PP1c preferably bind M-Ras/MRAS, but they also bind K-Ras/KRAS, N-Ras/NRAS and H-Ras/HRAS. Palmitoylated by the ZDHHC9-GOLGA7 complex. Depalmitoylated by ABHD17A, ABHD17B and ABHD17C. A continuous cycle of de- and re-palmitoylation regulates rapid exchange between plasma membrane and Golgi. In terms of processing, acetylation at Lys-104 prevents interaction with guanine nucleotide exchange factors (GEFs). Post-translationally, ubiquitinated by the BCR(LZTR1) E3 ubiquitin ligase complex at Lys-170 in a non-degradative manner, leading to inhibit Ras signaling by decreasing Ras association with membranes. Phosphorylation at Ser-89 enhances NRAS association with its downstream effectors.

Its subcellular location is the cell membrane. The protein resides in the golgi apparatus membrane. It catalyses the reaction GTP + H2O = GDP + phosphate + H(+). With respect to regulation, alternates between an inactive form bound to GDP and an active form bound to GTP. Activated by a guanine nucleotide-exchange factor (GEF) and inactivated by a GTPase-activating protein (GAP). Its function is as follows. Ras proteins bind GDP/GTP and possess intrinsic GTPase activity. The polypeptide is GTPase NRas (NRAS) (Pongo abelii (Sumatran orangutan)).